The primary structure comprises 170 residues: Acetolactate synthase small subunit (170 aa).

The 75-residue stretch at T9–E83 folds into the ACT domain. An Isoglutamyl lysine isopeptide (Lys-Gln) (interchain with Q-Cter in protein Pup) cross-link involves residue K46.

It belongs to the acetolactate synthase small subunit family. In terms of assembly, dimer of large and small chains.

The enzyme catalyses 2 pyruvate + H(+) = (2S)-2-acetolactate + CO2. It participates in amino-acid biosynthesis; L-isoleucine biosynthesis; L-isoleucine from 2-oxobutanoate: step 1/4. Its pathway is amino-acid biosynthesis; L-valine biosynthesis; L-valine from pyruvate: step 1/4. The chain is Acetolactate synthase small subunit (ilvH) from Mycolicibacterium smegmatis (strain ATCC 700084 / mc(2)155) (Mycobacterium smegmatis).